The following is a 596-amino-acid chain: NADH-quinone oxidoreductase subunit C/D (596 aa).

The interval 1-186 (MTDLTAQEPA…SPFELTKAKQ (186 aa)) is NADH dehydrogenase I subunit C. The NADH dehydrogenase I subunit D stretch occupies residues 210–596 (DFMFLNLGPN…IDFVMSDVDR (387 aa)).

This sequence in the N-terminal section; belongs to the complex I 30 kDa subunit family. In the C-terminal section; belongs to the complex I 49 kDa subunit family. As to quaternary structure, NDH-1 is composed of 13 different subunits. Subunits NuoB, CD, E, F, and G constitute the peripheral sector of the complex.

It is found in the cell inner membrane. The enzyme catalyses a quinone + NADH + 5 H(+)(in) = a quinol + NAD(+) + 4 H(+)(out). In terms of biological role, NDH-1 shuttles electrons from NADH, via FMN and iron-sulfur (Fe-S) centers, to quinones in the respiratory chain. The immediate electron acceptor for the enzyme in this species is believed to be ubiquinone. Couples the redox reaction to proton translocation (for every two electrons transferred, four hydrogen ions are translocated across the cytoplasmic membrane), and thus conserves the redox energy in a proton gradient. The polypeptide is NADH-quinone oxidoreductase subunit C/D (Shigella flexneri serotype 5b (strain 8401)).